Here is a 502-residue protein sequence, read N- to C-terminus: Lysine--tRNA ligase (502 aa).

Residues E411 and E418 each coordinate Mg(2+).

Belongs to the class-II aminoacyl-tRNA synthetase family. As to quaternary structure, homodimer. It depends on Mg(2+) as a cofactor.

Its subcellular location is the cytoplasm. The catalysed reaction is tRNA(Lys) + L-lysine + ATP = L-lysyl-tRNA(Lys) + AMP + diphosphate. In Clostridium kluyveri (strain ATCC 8527 / DSM 555 / NBRC 12016 / NCIMB 10680 / K1), this protein is Lysine--tRNA ligase.